The following is a 4563-amino-acid chain: Apolipoprotein B-100 (4563 aa).

The N-terminal stretch at 1-27 is a signal peptide; the sequence is MDPPRPALLALLALPALLLLLLAGARA. The heparin-binding stretch occupies residues 32-126; the sequence is LENVSLVCPK…KNSEEFAAAM (95 aa). N34 carries N-linked (GlcNAc...) asparagine glycosylation. 2 disulfides stabilise this stretch: C39–C88 and C78–C97. The Vitellogenin domain maps to 46–672; it reads FKHLRKYTYN…PNNYLPKESM (627 aa). An N-linked (GlcNAc...) asparagine glycan is attached at N185. 4 disulfides stabilise this stretch: C186–C212, C245–C261, C385–C390, and C478–C513. The segment at 232–306 is heparin-binding; that stretch reads TRPLSTLISS…RFFGEGTKKM (75 aa). The interval 902 to 959 is heparin-binding; that stretch reads NTNFFHESGLEAHVALKAGKLKFIIPSPKRPVKLLSGGNTLHLVSTTKTEVIPPLIEN. The cysteines at positions 966 and 976 are disulfide-linked. N-linked (GlcNAc...) asparagine glycosylation occurs at N983. A lipid anchor (S-palmitoyl cysteine) is attached at C1112. N-linked (GlcNAc...) asparagine glycosylation is found at N1368, N1377, and N1523. The residue at position 2004 (K2004) is an N6-acetyllysine. The tract at residues 2043 to 2178 is heparin-binding; the sequence is RDAVEKPQEF…EKLSQLQTYM (136 aa). 5 N-linked (GlcNAc...) asparagine glycosylation sites follow: N2239, N2560, N2779, N2982, and N3101. A heparin-binding region spans residues 3161–3236; the sequence is FLKTTKQSFD…KIKFDKYKAE (76 aa). The basic (possible receptor binding region) stretch occupies residues 3174–3184; sequence KAQYKKNKHRH. A disulfide bridge connects residues C3194 and C3324. Residue N3224 is glycosylated (N-linked (GlcNAc...) asparagine). S3279 is subject to Phosphoserine. N3336 and N3358 each carry an N-linked (GlcNAc...) asparagine glycan. The segment at 3373–3393 is LDL receptor binding; that stretch reads VIDALQYKLEGTTRLTRKRGL. The tract at residues 3383 to 3516 is heparin-binding; that stretch reads GTTRLTRKRG…REYSGTIASE (134 aa). Positions 3386–3394 are basic (possible receptor binding region); it reads RLTRKRGLK. Residues N3411, N3465, and N3895 are each glycosylated (N-linked (GlcNAc...) asparagine). S4048 carries the phosphoserine; by FAM20C modification. T4052 carries the post-translational modification Phosphothreonine. 2 N-linked (GlcNAc...) asparagine glycosylation sites follow: N4237 and N4431.

In terms of assembly, interacts with PCSK9. Interacts with MTTP. Interacts with AUP1. Interacts with CIDEB. In terms of processing, palmitoylated; structural requirement for proper assembly of the hydrophobic core of the lipoprotein particle.

It is found in the cytoplasm. The protein localises to the secreted. Its subcellular location is the lipid droplet. Its function is as follows. Apolipoprotein B is a major protein constituent of chylomicrons (apo B-48), LDL (apo B-100) and VLDL (apo B-100). Apo B-100 functions as a recognition signal for the cellular binding and internalization of LDL particles by the apoB/E receptor. The sequence is that of Apolipoprotein B-100 (APOB) from Homo sapiens (Human).